A 729-amino-acid polypeptide reads, in one-letter code: Circadian input-output histidine kinase CikA (729 aa).

The segment at 1–169 (MPQPIFDRIL…QVTTQIRQSL (169 aa)) is N-terminal domain. The segment at 170-314 (ELPELLKIAV…VEFLTHLSQH (145 aa)) is GAF domain. In terms of domain architecture, Histidine kinase spans 366–587 (TMSHELRTPL…TFTVGLPAIS (222 aa)). Position 369 is a phosphohistidine; by autocatalysis (His-369). Positions 613–729 (EGRIVLVSED…GLTSLATSAQ (117 aa)) are psR domain, binds KaiB.

The protein in the N-terminal section; belongs to the phytochrome family. In terms of assembly, homodimer. Part of the circadian clock (KaiA, KaiB, KaiC, CikA, RpaA, SasA), the composition of which varies during the circadian cycle. KaiA and CikA compete for binding to KaiB(fs). The PsR domain binds the KaiB:KaiC CI complex but poorly to either protein alone. KaiA and CikA bind to the same region of the KaiB(fs) form and therefore compete.

The catalysed reaction is ATP + protein L-histidine = ADP + protein N-phospho-L-histidine.. Functions in an input pathway to the Kai circadian clock. Senses oxidized quinones via its C-terminal pseudo-receiver domain, providing a link between cell metabolism and the clock. Affects the ratio of phosphorylated to unphosphorylated KaiC, binds quinones via its pseudo-receptor domain. Quinone-binding destabilizes the protein rapidly. Autophosphorylates, does not transfer the phosphate to its pseudo-receiver (PsR) domain. May play a role in cell division. Its function is as follows. Also functions in a two-component CikA/RpaA output pathway from the circadian clock, negatively regulating kaiBC expression independently of labA and of sasA. One of three clock output pathways. Dephosphorylates phospho-RpaA, enhanced by KaiB and KaiC, has only modest kinase activity on RpaA. The chain is Circadian input-output histidine kinase CikA from Thermosynechococcus vestitus (strain NIES-2133 / IAM M-273 / BP-1).